Consider the following 184-residue polypeptide: Ribosome-recycling factor (184 aa).

It belongs to the RRF family.

It localises to the cytoplasm. In terms of biological role, responsible for the release of ribosomes from messenger RNA at the termination of protein biosynthesis. May increase the efficiency of translation by recycling ribosomes from one round of translation to another. The sequence is that of Ribosome-recycling factor from Staphylococcus carnosus (strain TM300).